The primary structure comprises 195 residues: MALLFPLLAALVMTSYSPVGSLGCDLPQNHGLLSRNTLVLLHQMRRISPFLCLKDRRDFRFPQEMVKGSQLQKAHVMSVLHEMLQQIFSLFHTERSSAAWNMTLLDQLHTGLHQQLQHLETCLLQVVGEGESAGAISSPALTLRRYFQGIRVYLKEKKYSDCAWEVVRMEIMKSLFLSTNMQERLRSKDRDLGSS.

Residues 1-21 (MALLFPLLAALVMTSYSPVGS) constitute a signal peptide (or 23 in some molecules). 2 cysteine pairs are disulfide-bonded: Cys-24/Cys-122 and Cys-52/Cys-162. The N-linked (GlcNAc...) asparagine glycan is linked to Asn-101.

Belongs to the alpha/beta interferon family.

Its subcellular location is the secreted. In Homo sapiens (Human), this protein is Interferon omega-1 (IFNW1).